The chain runs to 217 residues: 2-C-methyl-D-erythritol 4-phosphate cytidylyltransferase (217 aa).

The protein belongs to the IspD/TarI cytidylyltransferase family. IspD subfamily.

The catalysed reaction is 2-C-methyl-D-erythritol 4-phosphate + CTP + H(+) = 4-CDP-2-C-methyl-D-erythritol + diphosphate. It functions in the pathway isoprenoid biosynthesis; isopentenyl diphosphate biosynthesis via DXP pathway; isopentenyl diphosphate from 1-deoxy-D-xylulose 5-phosphate: step 2/6. Its function is as follows. Catalyzes the formation of 4-diphosphocytidyl-2-C-methyl-D-erythritol from CTP and 2-C-methyl-D-erythritol 4-phosphate (MEP). This Chlamydia abortus (strain DSM 27085 / S26/3) (Chlamydophila abortus) protein is 2-C-methyl-D-erythritol 4-phosphate cytidylyltransferase.